The chain runs to 190 residues: Putative transcription factor ovo-like protein 3 (190 aa).

2 disordered regions span residues 1–21 (MPRA…GHLP) and 35–65 (SLGG…SAPR). Over residues 41–62 (AQQSSSVRDPWTAQPTQGNLTS) the composition is skewed to polar residues. 4 C2H2-type zinc fingers span residues 70–92 (LGCP…LKCH), 98–120 (HLCR…MRTH), 126–149 (FRCS…AKVH), and 165–187 (HVCE…RALH).

This sequence belongs to the krueppel C2H2-type zinc-finger protein family.

Its subcellular location is the nucleus. May act as a transcription regulator. The protein is Putative transcription factor ovo-like protein 3 (OVOL3) of Homo sapiens (Human).